A 66-amino-acid polypeptide reads, in one-letter code: Conotoxin Cal5.2 (66 aa).

An N-terminal signal peptide occupies residues 1-20 (MMYCLPVVCILLLLIPSSAT). The propeptide occupies 21-51 (FVVESRLEKDQAQSFTGDAWKRVSPIHEMIQ). Valine amide is present on Val-65.

The protein belongs to the conotoxin T superfamily. Contains 2 disulfide bonds that can be either 'C1-C3, C2-C4' or 'C1-C4, C2-C3', since these disulfide connectivities have been observed for conotoxins with cysteine framework V (for examples, see AC P0DQQ7 and AC P81755). In terms of tissue distribution, expressed by the venom duct.

The protein resides in the secreted. Probable neurotoxin with unknown target. Possibly targets ion channels. The sequence is that of Conotoxin Cal5.2 from Californiconus californicus (California cone).